The chain runs to 307 residues: Universal stress protein A family protein C25B2.10 (307 aa).

Residues 1–63 (MSESAPAGSK…RSSMEQPTFR (63 aa)) are disordered. Basic and acidic residues predominate over residues 21 to 30 (PEPRTSKDQQ). Ser44 is modified (phosphoserine). Phosphothreonine is present on Thr48. Phosphoserine occurs at positions 98 and 102.

Belongs to the universal stress protein A family.

The protein localises to the barrier septum. The protein resides in the cell tip. The polypeptide is Universal stress protein A family protein C25B2.10 (Schizosaccharomyces pombe (strain 972 / ATCC 24843) (Fission yeast)).